Reading from the N-terminus, the 351-residue chain is Phosphate acyltransferase (351 aa).

Belongs to the PlsX family. Homodimer. Probably interacts with PlsY.

It localises to the cytoplasm. It carries out the reaction a fatty acyl-[ACP] + phosphate = an acyl phosphate + holo-[ACP]. The protein operates within lipid metabolism; phospholipid metabolism. Catalyzes the reversible formation of acyl-phosphate (acyl-PO(4)) from acyl-[acyl-carrier-protein] (acyl-ACP). This enzyme utilizes acyl-ACP as fatty acyl donor, but not acyl-CoA. The sequence is that of Phosphate acyltransferase from Paramagnetospirillum magneticum (strain ATCC 700264 / AMB-1) (Magnetospirillum magneticum).